A 448-amino-acid chain; its full sequence is Ribulose bisphosphate carboxylase large chain (448 aa).

Lys4 is subject to N6,N6,N6-trimethyllysine. Residues Asn113 and Thr163 each contribute to the substrate site. Lys165 functions as the Proton acceptor in the catalytic mechanism. Lys167 is a binding site for substrate. Mg(2+) contacts are provided by Lys191, Asp193, and Glu194. Lys191 is modified (N6-carboxylysine). His284 functions as the Proton acceptor in the catalytic mechanism. Substrate is bound by residues Arg285, His317, and Ser369.

The protein belongs to the RuBisCO large chain family. Type I subfamily. As to quaternary structure, heterohexadecamer of 8 large chains and 8 small chains; disulfide-linked. The disulfide link is formed within the large subunit homodimers. It depends on Mg(2+) as a cofactor. In terms of processing, the disulfide bond which can form in the large chain dimeric partners within the hexadecamer appears to be associated with oxidative stress and protein turnover.

Its subcellular location is the plastid. It is found in the chloroplast. The enzyme catalyses 2 (2R)-3-phosphoglycerate + 2 H(+) = D-ribulose 1,5-bisphosphate + CO2 + H2O. It carries out the reaction D-ribulose 1,5-bisphosphate + O2 = 2-phosphoglycolate + (2R)-3-phosphoglycerate + 2 H(+). In terms of biological role, ruBisCO catalyzes two reactions: the carboxylation of D-ribulose 1,5-bisphosphate, the primary event in carbon dioxide fixation, as well as the oxidative fragmentation of the pentose substrate in the photorespiration process. Both reactions occur simultaneously and in competition at the same active site. The protein is Ribulose bisphosphate carboxylase large chain of Eucryphia lucida (Leatherwood).